We begin with the raw amino-acid sequence, 361 residues long: Aminomethyltransferase (361 aa).

This sequence belongs to the GcvT family. In terms of assembly, the glycine cleavage system is composed of four proteins: P, T, L and H.

The catalysed reaction is N(6)-[(R)-S(8)-aminomethyldihydrolipoyl]-L-lysyl-[protein] + (6S)-5,6,7,8-tetrahydrofolate = N(6)-[(R)-dihydrolipoyl]-L-lysyl-[protein] + (6R)-5,10-methylene-5,6,7,8-tetrahydrofolate + NH4(+). In terms of biological role, the glycine cleavage system catalyzes the degradation of glycine. This Bacteroides fragilis (strain ATCC 25285 / DSM 2151 / CCUG 4856 / JCM 11019 / LMG 10263 / NCTC 9343 / Onslow / VPI 2553 / EN-2) protein is Aminomethyltransferase.